The following is a 308-amino-acid chain: F420-non-reducing hydrogenase subunit G (308 aa).

Belongs to the [NiFe]/[NiFeSe] hydrogenase small subunit family. The F420-non-reducing hydrogenase is composed of three subunits; MvhA, MvhD and MvhG. It forms a complex with the heterodisulfide reductase (hdr).

In terms of biological role, part of a complex that provides reducing equivalents for heterodisulfide reductase. The chain is F420-non-reducing hydrogenase subunit G (mvhG) from Methanothermobacter marburgensis (strain ATCC BAA-927 / DSM 2133 / JCM 14651 / NBRC 100331 / OCM 82 / Marburg) (Methanobacterium thermoautotrophicum).